A 116-amino-acid polypeptide reads, in one-letter code: MSNIIKQLEQEQLKQNVPSFRPGDTLEVKVWVVEGSKRRLQAFEGVVIAIRNRGLHSAFTLRKVSNGVGVERVFQTHSPAVDSIAVKRKGAVRKAKLYYLRERSGKSARIKERLGA.

The protein belongs to the bacterial ribosomal protein bL19 family.

Functionally, this protein is located at the 30S-50S ribosomal subunit interface and may play a role in the structure and function of the aminoacyl-tRNA binding site. In Haemophilus influenzae (strain 86-028NP), this protein is Large ribosomal subunit protein bL19.